A 323-amino-acid chain; its full sequence is Methionyl-tRNA formyltransferase (323 aa).

113 to 116 (SLLP) is a binding site for (6S)-5,6,7,8-tetrahydrofolate.

This sequence belongs to the Fmt family.

The catalysed reaction is L-methionyl-tRNA(fMet) + (6R)-10-formyltetrahydrofolate = N-formyl-L-methionyl-tRNA(fMet) + (6S)-5,6,7,8-tetrahydrofolate + H(+). Its function is as follows. Attaches a formyl group to the free amino group of methionyl-tRNA(fMet). The formyl group appears to play a dual role in the initiator identity of N-formylmethionyl-tRNA by promoting its recognition by IF2 and preventing the misappropriation of this tRNA by the elongation apparatus. This Porphyromonas gingivalis (strain ATCC 33277 / DSM 20709 / CIP 103683 / JCM 12257 / NCTC 11834 / 2561) protein is Methionyl-tRNA formyltransferase.